The primary structure comprises 148 residues: uncharacterized protein (148 aa).

The N-terminal stretch at 1 to 18 is a signal peptide; sequence MKIILTVLAGVGLLSAGG. Cysteine 19 carries N-palmitoyl cysteine lipidation. The S-diacylglycerol cysteine moiety is linked to residue cysteine 19.

Its subcellular location is the cell membrane. This is an uncharacterized protein from Bacillus subtilis (strain 168).